We begin with the raw amino-acid sequence, 482 residues long: tRNA sulfurtransferase (482 aa).

The region spanning 61-165 (DVTLSVLTQT…NDKLNLIIAR (105 aa)) is the THUMP domain. Residues 183–184 (LI), lysine 265, glycine 287, and glutamine 296 contribute to the ATP site. Cysteine 344 and cysteine 456 are disulfide-bonded. The Rhodanese domain maps to 404 to 482 (LGSDVVVLDI…GYKNVKVYRP (79 aa)). Cysteine 456 acts as the Cysteine persulfide intermediate in catalysis.

It belongs to the ThiI family.

It localises to the cytoplasm. The enzyme catalyses [ThiI sulfur-carrier protein]-S-sulfanyl-L-cysteine + a uridine in tRNA + 2 reduced [2Fe-2S]-[ferredoxin] + ATP + H(+) = [ThiI sulfur-carrier protein]-L-cysteine + a 4-thiouridine in tRNA + 2 oxidized [2Fe-2S]-[ferredoxin] + AMP + diphosphate. The catalysed reaction is [ThiS sulfur-carrier protein]-C-terminal Gly-Gly-AMP + S-sulfanyl-L-cysteinyl-[cysteine desulfurase] + AH2 = [ThiS sulfur-carrier protein]-C-terminal-Gly-aminoethanethioate + L-cysteinyl-[cysteine desulfurase] + A + AMP + 2 H(+). The protein operates within cofactor biosynthesis; thiamine diphosphate biosynthesis. Its function is as follows. Catalyzes the ATP-dependent transfer of a sulfur to tRNA to produce 4-thiouridine in position 8 of tRNAs, which functions as a near-UV photosensor. Also catalyzes the transfer of sulfur to the sulfur carrier protein ThiS, forming ThiS-thiocarboxylate. This is a step in the synthesis of thiazole, in the thiamine biosynthesis pathway. The sulfur is donated as persulfide by IscS. The protein is tRNA sulfurtransferase of Aliivibrio fischeri (strain MJ11) (Vibrio fischeri).